Consider the following 210-residue polypeptide: Large ribosomal subunit protein uL3 (210 aa).

Belongs to the universal ribosomal protein uL3 family. Part of the 50S ribosomal subunit. Forms a cluster with proteins L14 and L19.

Functionally, one of the primary rRNA binding proteins, it binds directly near the 3'-end of the 23S rRNA, where it nucleates assembly of the 50S subunit. This chain is Large ribosomal subunit protein uL3, found in Caldicellulosiruptor bescii (strain ATCC BAA-1888 / DSM 6725 / KCTC 15123 / Z-1320) (Anaerocellum thermophilum).